Consider the following 575-residue polypeptide: Muellerian-inhibiting factor (575 aa).

Residues 1 to 24 (MPGPSLSLALVLSAMGALLRPGTP) form the signal peptide. A propeptide spanning residues 25 to 466 (REEVFSTSAL…ERSGSARAQR (442 aa)) is cleaved from the precursor. Residues Asn78 and Asn344 are each glycosylated (N-linked (GlcNAc...) asparagine). 3 cysteine pairs are disulfide-bonded: Cys477-Cys541, Cys503-Cys572, and Cys507-Cys574.

This sequence belongs to the TGF-beta family. Homodimer; disulfide-linked. Preproprotein is proteolytically processed to generate N- and C-terminal cleavage products that homodimerize and associate to form a biologically active non-covalent complex. Binding of the non-covalent complex to AMHR2 induces dissociation of the pro-region from the mature C-terminal dimer. The N-terminal portion of the protein, despite having no intrinsic activity, has the role of amplifying the activity of the C-terminus. Expressed in fetal testis and adult ovaries.

It is found in the secreted. Its function is as follows. Plays an important role in several reproductive functions. Induces Muellerian duct regression during male fetal sexual differentiation and plays a role in Leydig cell differentiation and function. In female acts as a negative regulator of the primordial to primary follicle transition and decreases FSH sensitivity of growing follicles. AMH signals by binding to a specific type-II receptor, AMHR2, that heterodimerizes with type-I receptors (ACVR1 and BMPR1A), and recruiting SMAD proteins that are translocated to the nucleus to regulate target gene expression. In Bos taurus (Bovine), this protein is Muellerian-inhibiting factor (AMH).